A 318-amino-acid chain; its full sequence is MKLSLIAQFLELPLPSIEKEIVGISSLEGATPDEISFVEQDRYASSLKESRAGAVLIRASLLSLVPQGCTPLVSAHPYLDMARLSKLFAKPPLGLNAQEPQIAPSAQIAPSATIGKGAVIGERTIVMAGAVIGEGVCLGEDCLIYPNVVIYRDTQIGNRVFIHAGSVIGSDGFGYAHTERGEHIKIHHNGIVVIEDDVELGANNCIDRAVFGETRIKRGTKIDNLVQIAHNCVLGEHSIVVSQVGLAGSTTTGRNVIFGGQSATSGHLHVGDFATIAARGGVSKSIEGKKTYAGFPLMEHKEWLKLQASLKHQLKKSQ.

Histidine 230 serves as the catalytic Proton acceptor.

The protein belongs to the transferase hexapeptide repeat family. LpxD subfamily. In terms of assembly, homotrimer.

The catalysed reaction is a UDP-3-O-[(3R)-3-hydroxyacyl]-alpha-D-glucosamine + a (3R)-hydroxyacyl-[ACP] = a UDP-2-N,3-O-bis[(3R)-3-hydroxyacyl]-alpha-D-glucosamine + holo-[ACP] + H(+). It functions in the pathway bacterial outer membrane biogenesis; LPS lipid A biosynthesis. Catalyzes the N-acylation of UDP-3-O-acylglucosamine using 3-hydroxyacyl-ACP as the acyl donor. Is involved in the biosynthesis of lipid A, a phosphorylated glycolipid that anchors the lipopolysaccharide to the outer membrane of the cell. The protein is UDP-3-O-acylglucosamine N-acyltransferase of Wolinella succinogenes (strain ATCC 29543 / DSM 1740 / CCUG 13145 / JCM 31913 / LMG 7466 / NCTC 11488 / FDC 602W) (Vibrio succinogenes).